A 248-amino-acid polypeptide reads, in one-letter code: Phosphatidylglycerol--prolipoprotein diacylglyceryl transferase (248 aa).

The next 3 membrane-spanning stretches (helical) occupy residues 6–26, 47–67, and 84–104; these read FTLFGIDIMWYGILMACGMIL, NIAIIAIPVGLICARIYYVVF, and GGGLAIHGGLIGGILAGYIYT. Arg130 is a binding site for a 1,2-diacyl-sn-glycero-3-phospho-(1'-sn-glycerol). A run of 2 helical transmembrane segments spans residues 186-206 and 218-238; these read GQVIVTYITLYSIGRFFIEGL and MAQVISLIGVIGGIIAHVYLS.

The protein belongs to the Lgt family.

Its subcellular location is the cell membrane. The catalysed reaction is L-cysteinyl-[prolipoprotein] + a 1,2-diacyl-sn-glycero-3-phospho-(1'-sn-glycerol) = an S-1,2-diacyl-sn-glyceryl-L-cysteinyl-[prolipoprotein] + sn-glycerol 1-phosphate + H(+). Its pathway is protein modification; lipoprotein biosynthesis (diacylglyceryl transfer). Its function is as follows. Catalyzes the transfer of the diacylglyceryl group from phosphatidylglycerol to the sulfhydryl group of the N-terminal cysteine of a prolipoprotein, the first step in the formation of mature lipoproteins. The polypeptide is Phosphatidylglycerol--prolipoprotein diacylglyceryl transferase (Clostridioides difficile (strain 630) (Peptoclostridium difficile)).